The following is a 389-amino-acid chain: Succinate--CoA ligase [ADP-forming] subunit beta (389 aa).

Residues 9-236 (RDMFEAHGVP…KDAADPLEAK (228 aa)) enclose the ATP-grasp domain. ATP-binding positions include Lys-45, 52-54 (GRG), Ala-94, and Glu-99. The Mg(2+) site is built by Asn-191 and Asp-205. Substrate is bound by residues Asn-256 and 318–320 (GIT).

This sequence belongs to the succinate/malate CoA ligase beta subunit family. Heterotetramer of two alpha and two beta subunits. Mg(2+) serves as cofactor.

It catalyses the reaction succinate + ATP + CoA = succinyl-CoA + ADP + phosphate. It carries out the reaction GTP + succinate + CoA = succinyl-CoA + GDP + phosphate. The protein operates within carbohydrate metabolism; tricarboxylic acid cycle; succinate from succinyl-CoA (ligase route): step 1/1. Its function is as follows. Succinyl-CoA synthetase functions in the citric acid cycle (TCA), coupling the hydrolysis of succinyl-CoA to the synthesis of either ATP or GTP and thus represents the only step of substrate-level phosphorylation in the TCA. The beta subunit provides nucleotide specificity of the enzyme and binds the substrate succinate, while the binding sites for coenzyme A and phosphate are found in the alpha subunit. This is Succinate--CoA ligase [ADP-forming] subunit beta from Paenarthrobacter aurescens (strain TC1).